A 577-amino-acid chain; its full sequence is Cryptochrome DASH, chloroplastic/mitochondrial (577 aa).

The N-terminal 53 residues, 1–53 (MIKQPFLLTKFTPFSSKSKHTLFTFHCNFSIKMASLTARTTPTVQNVPGLTPE), are a transit peptide targeting the chloroplast and mitochondrion. One can recognise a Photolyase/cryptochrome alpha/beta domain in the interval 78 to 219 (GVAIVWFRND…GNDPGSGNTT (142 aa)). The interval 550-577 (TKKTGDSKTAFSSRRGRPEDNRRKRHGY) is disordered.

The protein belongs to the DNA photolyase class-1 family. FAD serves as cofactor. It depends on (6R)-5,10-methylene-5,6,7,8-tetrahydrofolate as a cofactor. As to expression, expressed in the endosperm and embryo 96 hours after seed imbibition. In the embryo, detected in the root meristem, the root cap, the shoot apical meristem and the epidermis of cotyledons. In adult plants, detcted in roots, the whole leaf lamina, the stem and in glandular trichomes.

The protein resides in the plastid. It is found in the chloroplast. It localises to the mitochondrion. In terms of biological role, may have a photoreceptor function and might bind ss- and ds-DNA in a sequence non-specific manner. Lacks photolyase activity. Has a potential role in detecting the dawn and dusk transitions and, consequently, in circadian input pathways. This Solanum lycopersicum (Tomato) protein is Cryptochrome DASH, chloroplastic/mitochondrial.